A 122-amino-acid chain; its full sequence is Small ribosomal subunit protein uS13 (122 aa).

A disordered region spans residues Arg93–Lys122.

This sequence belongs to the universal ribosomal protein uS13 family. Part of the 30S ribosomal subunit. Forms a loose heterodimer with protein S19. Forms two bridges to the 50S subunit in the 70S ribosome.

Located at the top of the head of the 30S subunit, it contacts several helices of the 16S rRNA. In the 70S ribosome it contacts the 23S rRNA (bridge B1a) and protein L5 of the 50S subunit (bridge B1b), connecting the 2 subunits; these bridges are implicated in subunit movement. Contacts the tRNAs in the A and P-sites. This is Small ribosomal subunit protein uS13 from Clostridium botulinum (strain Alaska E43 / Type E3).